Consider the following 513-residue polypeptide: METNQLFSLDNLITILPECVLIICLLTILMIDVITKKSVWLSNIALLGLLTSTFILLFQLTNNEVGFTAFLGSFQVDGFTIAFRCLLTLSSALCIPLSTEYIRRSGMTQAEFLILLLTATLGGMFLCGANDLVTIFVSLECLSLSSYLLAGQAKKDIRSNEASLKYLLMGGASSSILVYGFSWLYGLSGGELQLSKIVNGISSQDIYLSSAVSLDGKTFGALGLWVAFVCILVGIGFKISAVPFHQWTPDVYEGSPTPVVAFLSVGSKAAGLALATRLLSIVFPAIEDQWHIVLEIVAFLSMVFGNLIAATQTSMKRMLAYSSISQAGYLLIAILVGNSDGYASMITYLLIYTFMNLGAFACTVIFGLRTGTDQIRDYTGLYLKDPWLAFALSICLLSLAGMPPLAGFFGKLYLFWCGWQSHLYLLVYTGLITSVISLYYYLRVVKAMMTKEVKEMSTYVREYVTPSMSIFSSSSIELGLTLCVLASSILGFFMNPLIDVTKQSMLVNNFLVF.

Transmembrane regions (helical) follow at residues 11–31 (NLITILPECVLIICLLTILMI), 38–58 (SVWLSNIALLGLLTSTFILLF), 78–98 (GFTIAFRCLLTLSSALCIPLS), 112–132 (FLILLLTATLGGMFLCGANDL), 133–153 (VTIFVSLECLSLSSYLLAGQA), 167–187 (LLMGGASSSILVYGFSWLYGL), 219–239 (FGALGLWVAFVCILVGIGFKI), 256–276 (PTPVVAFLSVGSKAAGLALAT), 290–310 (WHIVLEIVAFLSMVFGNLIAA), 318–338 (MLAYSSISQAGYLLIAILVGN), 348–368 (YLLIYTFMNLGAFACTVIFGL), 389–409 (AFALSICLLSLAGMPPLAGFF), 422–442 (HLYLLVYTGLITSVISLYYYL), and 478–498 (LGLTLCVLASSILGFFMNPLI).

The protein belongs to the complex I subunit 2 family. NDH is composed of at least 16 different subunits, 5 of which are encoded in the nucleus.

It localises to the plastid. It is found in the chloroplast thylakoid membrane. It catalyses the reaction a plastoquinone + NADH + (n+1) H(+)(in) = a plastoquinol + NAD(+) + n H(+)(out). The catalysed reaction is a plastoquinone + NADPH + (n+1) H(+)(in) = a plastoquinol + NADP(+) + n H(+)(out). Functionally, NDH shuttles electrons from NAD(P)H:plastoquinone, via FMN and iron-sulfur (Fe-S) centers, to quinones in the photosynthetic chain and possibly in a chloroplast respiratory chain. The immediate electron acceptor for the enzyme in this species is believed to be plastoquinone. Couples the redox reaction to proton translocation, and thus conserves the redox energy in a proton gradient. This is NAD(P)H-quinone oxidoreductase subunit 2, chloroplastic from Staurastrum punctulatum (Green alga).